We begin with the raw amino-acid sequence, 82 residues long: Polyketide biosynthesis acyl-carrier-protein AcpK (82 aa).

The 76-residue stretch at 4–79 (QRIFEVLITN…ELAEVLYDKV (76 aa)) folds into the Carrier domain. Serine 39 carries the O-(pantetheine 4'-phosphoryl)serine modification.

Post-translationally, 4'-phosphopantetheine is transferred from CoA to a specific serine of apo-ACP by sfp.

Its subcellular location is the cytoplasm. It functions in the pathway antibiotic biosynthesis; bacillaene biosynthesis. Functionally, involved in some intermediate steps for the synthesis of the antibiotic polyketide bacillaene which is involved in secondary metabolism. In Bacillus subtilis (strain 168), this protein is Polyketide biosynthesis acyl-carrier-protein AcpK (acpK).